The primary structure comprises 672 residues: MRSIRSFANDDRHVMVKHSTIYPSPEELEAVQNMVSTVECALKHVSDWMDEKNKSVKCEGDVEAKEEAAESNAKDQSGRTLCGVMRIGLVAKGLLIKDDMDLELVLMCKEKPTKTLLCIVKDNLPIQIQKLTEEKYLVEEHVNEAAIIIRNTKEPKLTLKVILTSPLIRDEAEKKEGDSVAMKDPPDLLDRQKCLEALASLRHAKWFQARANGLKSCVIVLRILRDLCNRVPTWAPLKGWPLELICEKSIGTCNRPLGAGEALRRVMECLASGILLPGGPGLHDPCEREPTDALSDMTVQQKEAITHSAQHALRLSAFGQIYKVLEMDPLPSNKSFQKYSWSVADKEGTGSSALKRPFEDGVGDDKDPNKKMKRNLRKILDSKAIDLMNALMRLNQIRPGLQYKLLSQSGPVHAPVFTMSVDVDGTTYEASGPSKKTAKLHVAVKVLQAMGYPTGFDADVECVSSDEKSDNEGKNETVSSISSNNTGNSTADTSATLEVRTQGPILTASGKNPVMELNEKRRGLKYELISETGGSHDKRFVMEVEVDGQKFRGAGPNKKVAKASAALAALEKLFSGPNAANNKKKKILPQQTKGVVNTAVSAAVQAVRGRGRGALTRGAFVGAAAATGYITPGYGAPYGYSTAAPAYGLPKRMVLLPVMKFPTYPVPHYSFF.

In terms of domain architecture, DZF spans 5–362; sequence RSFANDDRHV…ALKRPFEDGV (358 aa). The tract at residues 348–370 is disordered; that stretch reads GTGSSALKRPFEDGVGDDKDPNK. Residues 356-370 are compositionally biased toward basic and acidic residues; the sequence is RPFEDGVGDDKDPNK. Residues 386–452 form the DRBM 1 domain; sequence DLMNALMRLN…AVKVLQAMGY (67 aa). The tract at residues 463 to 494 is disordered; it reads VSSDEKSDNEGKNETVSSISSNNTGNSTADTS. A compositionally biased stretch (basic and acidic residues) spans 465–475; sequence SDEKSDNEGKN. The segment covering 477-490 has biased composition (low complexity); sequence TVSSISSNNTGNST. In terms of domain architecture, DRBM 2 spans 509 to 575; sequence SGKNPVMELN…ALAALEKLFS (67 aa).

It localises to the cytoplasm. May be involved in normal spermatogenesis and sperm function. Binds to double-stranded DNA and RNA. This chain is Spermatid perinuclear RNA-binding protein (STRBP), found in Gallus gallus (Chicken).